The sequence spans 145 residues: Large ribosomal subunit protein uL15 (145 aa).

The span at methionine 1–glycine 30 shows a compositional bias: basic residues. A disordered region spans residues methionine 1–tyrosine 48.

This sequence belongs to the universal ribosomal protein uL15 family. As to quaternary structure, component of the large ribosomal subunit.

It localises to the cytoplasm. It is found in the cytosol. The protein localises to the rough endoplasmic reticulum. Component of the large ribosomal subunit. The protein is Large ribosomal subunit protein uL15 (rpl-27a) of Oscheius tipulae.